The sequence spans 94 residues: Translation initiation factor IF-1 (94 aa).

The region spanning 1 to 72 (MAKEELIQFE…EKGRLIFRHK (72 aa)) is the S1-like domain. The tract at residues 71-94 (HKDERPGGTGAPRSGPPRGQFRRR) is disordered.

This sequence belongs to the IF-1 family. In terms of assembly, component of the 30S ribosomal translation pre-initiation complex which assembles on the 30S ribosome in the order IF-2 and IF-3, IF-1 and N-formylmethionyl-tRNA(fMet); mRNA recruitment can occur at any time during PIC assembly.

It is found in the cytoplasm. In terms of biological role, one of the essential components for the initiation of protein synthesis. Stabilizes the binding of IF-2 and IF-3 on the 30S subunit to which N-formylmethionyl-tRNA(fMet) subsequently binds. Helps modulate mRNA selection, yielding the 30S pre-initiation complex (PIC). Upon addition of the 50S ribosomal subunit IF-1, IF-2 and IF-3 are released leaving the mature 70S translation initiation complex. The polypeptide is Translation initiation factor IF-1 (Rhodopseudomonas palustris (strain HaA2)).